The chain runs to 493 residues: UDP-N-acetylmuramoyl-L-alanyl-D-glutamate--2,6-diaminopimelate ligase (493 aa).

The UDP-N-acetyl-alpha-D-muramoyl-L-alanyl-D-glutamate site is built by leucine 30 and serine 32. 117-123 (GTNGKTT) is an ATP binding site. Residues asparagine 158, 159-160 (TT), serine 186, glutamine 192, and arginine 194 each bind UDP-N-acetyl-alpha-D-muramoyl-L-alanyl-D-glutamate. Lysine 226 carries the N6-carboxylysine modification. Meso-2,6-diaminopimelate is bound by residues arginine 388, 412–415 (DNPR), glycine 463, and glutamate 467. The Meso-diaminopimelate recognition motif motif lies at 412-415 (DNPR).

It belongs to the MurCDEF family. MurE subfamily. Mg(2+) serves as cofactor. Post-translationally, carboxylation is probably crucial for Mg(2+) binding and, consequently, for the gamma-phosphate positioning of ATP.

Its subcellular location is the cytoplasm. It catalyses the reaction UDP-N-acetyl-alpha-D-muramoyl-L-alanyl-D-glutamate + meso-2,6-diaminopimelate + ATP = UDP-N-acetyl-alpha-D-muramoyl-L-alanyl-gamma-D-glutamyl-meso-2,6-diaminopimelate + ADP + phosphate + H(+). The protein operates within cell wall biogenesis; peptidoglycan biosynthesis. Its function is as follows. Catalyzes the addition of meso-diaminopimelic acid to the nucleotide precursor UDP-N-acetylmuramoyl-L-alanyl-D-glutamate (UMAG) in the biosynthesis of bacterial cell-wall peptidoglycan. The polypeptide is UDP-N-acetylmuramoyl-L-alanyl-D-glutamate--2,6-diaminopimelate ligase (Vibrio parahaemolyticus serotype O3:K6 (strain RIMD 2210633)).